The primary structure comprises 373 residues: Transaldolase (373 aa).

Lys-143 acts as the Schiff-base intermediate with substrate in catalysis.

Belongs to the transaldolase family. Type 2 subfamily.

It localises to the cytoplasm. The enzyme catalyses D-sedoheptulose 7-phosphate + D-glyceraldehyde 3-phosphate = D-erythrose 4-phosphate + beta-D-fructose 6-phosphate. The protein operates within carbohydrate degradation; pentose phosphate pathway; D-glyceraldehyde 3-phosphate and beta-D-fructose 6-phosphate from D-ribose 5-phosphate and D-xylulose 5-phosphate (non-oxidative stage): step 2/3. Transaldolase is important for the balance of metabolites in the pentose-phosphate pathway. In Mycolicibacterium paratuberculosis (strain ATCC BAA-968 / K-10) (Mycobacterium paratuberculosis), this protein is Transaldolase.